The primary structure comprises 363 residues: uncharacterized protein (363 aa).

The next 4 helical transmembrane spans lie at 34–54 (YVYD…IILW), 60–80 (LALF…TLLV), 91–111 (EIAD…TAAG), and 112–132 (LMFS…PLFL). Polar residues predominate over residues 232–245 (SSTTTHSTDSEQIL). Positions 232-363 (SSTTTHSTDS…SSQKKKPSRK (132 aa)) are disordered. Low complexity-rich tracts occupy residues 246 to 268 (TSVS…TPPN) and 275 to 285 (DSNSSDSSSSS). The span at 322–342 (SRSERNAQHHRNKDQEQRQDS) shows a compositional bias: basic and acidic residues.

This sequence belongs to the chlamydial CPn_0443/CT_005/TC_0273 family.

It is found in the cell membrane. This is an uncharacterized protein from Chlamydia trachomatis serovar D (strain ATCC VR-885 / DSM 19411 / UW-3/Cx).